Consider the following 175-residue polypeptide: Ribulose bisphosphate carboxylase small subunit, chloroplastic (175 aa).

Residues 1–46 constitute a chloroplast transit peptide; it reads MAPSVMASSATTVAPFQGLKSTAGMPVARRSGNSSFGNVSNGGRIR. The tract at residues 60-64 is interaction with large subunit; that stretch reads ETLSY.

Belongs to the RuBisCO small chain family. As to quaternary structure, heterohexadecamer of 8 large and 8 small subunits.

It localises to the plastid. Its subcellular location is the chloroplast. RuBisCO catalyzes two reactions: the carboxylation of D-ribulose 1,5-bisphosphate, the primary event in carbon dioxide fixation, as well as the oxidative fragmentation of the pentose substrate. Both reactions occur simultaneously and in competition at the same active site. Although the small subunit is not catalytic it is essential for maximal activity. The sequence is that of Ribulose bisphosphate carboxylase small subunit, chloroplastic from Oryza sativa subsp. indica (Rice).